Reading from the N-terminus, the 715-residue chain is MQEFDKSISFDGRDIRLKLGLLAPQAGGAVLIQSGDTAVLVTATTTKGREGIDFLPLTVDYEERLYAAGRIPGGFLRREGRPPERAILISRLIDRPLRPLFPNWWRNDIQIIATTLSMDEEVPPDVLAVTGSSIAVIQAQIPFYGPMAAVRVGLIGDDFIINPTYREVENGDLDLVVAGSPDGVVMVEAGANQLPEQDIIEAIDFGYEAVRDLIGAQYEIMEELGMEIAKAEPPSVDEALEKFISDRAADSIKKVLVQYDLGKAERDSALDNIKETAIEEAIAELPEDDPIKVTTSEDPKAVGNLYKGLTKKLMRSQIVDEGIRVDGRKLDEVRPISCRVGLLPPRVHGSALFTRGLTQVFSLATLGTPGDAQDLGDDLHPEDEKRYLHHYNFPPFSVGETKPLRSPGRREIGHGALAERAILPVLPPQDEFPYVVRVVSEVVSSNGSTSMGSVCGSTLALMDAGVPIIKPVSGAAMGLIREGKEVRILTDIQGIEDFLGDMDFKVAGTDTGITALQMDMKITGLSMDVVAKAIEQALPARLHILDKMLAVIDQPRPELSPFAPRLLTMKIDPEQIGLVIGPGGKTIKSITEQTGSKIDIADDGTVTIAAIQAKKAERARDLIFNMTRKLNEGEVYLGRVTRIIPIGAFVEVLPGKEGMIHISQLAERRVGKVEEEVAVGDEVVVKVREIDNKGRLNLTRLGIHPDEAAAVRKTF.

The Mg(2+) site is built by Asp497 and Asp503. The region spanning 564–623 (PRLLTMKIDPEQIGLVIGPGGKTIKSITEQTGSKIDIADDGTVTIAAIQAKKAERARDLI) is the KH domain. In terms of domain architecture, S1 motif spans 633–701 (GEVYLGRVTR…NKGRLNLTRL (69 aa)).

This sequence belongs to the polyribonucleotide nucleotidyltransferase family. Requires Mg(2+) as cofactor.

It is found in the cytoplasm. It carries out the reaction RNA(n+1) + phosphate = RNA(n) + a ribonucleoside 5'-diphosphate. Its function is as follows. Involved in mRNA degradation. Catalyzes the phosphorolysis of single-stranded polyribonucleotides processively in the 3'- to 5'-direction. The sequence is that of Polyribonucleotide nucleotidyltransferase from Crocosphaera subtropica (strain ATCC 51142 / BH68) (Cyanothece sp. (strain ATCC 51142)).